The chain runs to 372 residues: Probable L-tyrosine/L-aspartate decarboxylase (372 aa).

K215 bears the N6-(pyridoxal phosphate)lysine mark.

The protein belongs to the group II decarboxylase family. MfnA subfamily. Requires pyridoxal 5'-phosphate as cofactor.

It catalyses the reaction L-tyrosine + H(+) = tyramine + CO2. It carries out the reaction L-aspartate + H(+) = beta-alanine + CO2. Its pathway is cofactor biosynthesis; methanofuran biosynthesis. It functions in the pathway cofactor biosynthesis; coenzyme A biosynthesis. In terms of biological role, catalyzes the decarboxylation of L-tyrosine to produce tyramine for methanofuran biosynthesis. Can also catalyze the decarboxylation of L-aspartate to produce beta-alanine for coenzyme A (CoA) biosynthesis. The protein is Probable L-tyrosine/L-aspartate decarboxylase of Methanopyrus kandleri (strain AV19 / DSM 6324 / JCM 9639 / NBRC 100938).